The chain runs to 165 residues: Large ribosomal subunit protein uL10 (165 aa).

The protein belongs to the universal ribosomal protein uL10 family. In terms of assembly, part of the ribosomal stalk of the 50S ribosomal subunit. The N-terminus interacts with L11 and the large rRNA to form the base of the stalk. The C-terminus forms an elongated spine to which L12 dimers bind in a sequential fashion forming a multimeric L10(L12)X complex.

Functionally, forms part of the ribosomal stalk, playing a central role in the interaction of the ribosome with GTP-bound translation factors. The sequence is that of Large ribosomal subunit protein uL10 (rplJ) from Halalkalibacterium halodurans (strain ATCC BAA-125 / DSM 18197 / FERM 7344 / JCM 9153 / C-125) (Bacillus halodurans).